A 436-amino-acid polypeptide reads, in one-letter code: UDP-N-acetylmuramate--L-alanine ligase (436 aa).

An ATP-binding site is contributed by 108 to 114 (GAHGKTS).

This sequence belongs to the MurCDEF family.

The protein resides in the cytoplasm. It catalyses the reaction UDP-N-acetyl-alpha-D-muramate + L-alanine + ATP = UDP-N-acetyl-alpha-D-muramoyl-L-alanine + ADP + phosphate + H(+). Its pathway is cell wall biogenesis; peptidoglycan biosynthesis. Its function is as follows. Cell wall formation. This is UDP-N-acetylmuramate--L-alanine ligase from Bacillus cereus (strain B4264).